The following is a 366-amino-acid chain: Acetylserotonin O-methyltransferase 2 (366 aa).

S-adenosyl-L-homocysteine contacts are provided by Gly209, Asp232, Asp253, and Lys267. The Proton acceptor role is filled by His271. Active-site residues include Glu302 and Glu332.

It belongs to the class I-like SAM-binding methyltransferase superfamily. Cation-independent O-methyltransferase family. In terms of assembly, homodimer. In terms of tissue distribution, expressed in roots, leaves, stems and flowers.

The protein resides in the cytoplasm. The catalysed reaction is N-acetylserotonin + S-adenosyl-L-methionine = melatonin + S-adenosyl-L-homocysteine + H(+). It functions in the pathway aromatic compound metabolism; melatonin biosynthesis; melatonin from serotonin: step 1/2. Methyltransferase which catalyzes the transfer of a methyl group onto N-acetylserotonin, producing melatonin (N-acetyl-5-methoxytryptamine). This chain is Acetylserotonin O-methyltransferase 2, found in Oryza sativa subsp. japonica (Rice).